Consider the following 32-residue polypeptide: Natriuretic peptide Coa_NP2 (32 aa).

A disulfide bridge connects residues Cys-8 and Cys-24.

Belongs to the natriuretic peptide family. Snake NP subfamily. Expressed by the venom gland.

The protein localises to the secreted. Functionally, snake venom natriuretic peptide that exhibits hypotensive and vasorelaxant effects. Produces a dose-dependent hypotension in rats, followed by significant increases in concentrations of markers of nitric oxide (NO) formation measured in the plasma and vasorelaxation in a thoracic aortic ring bath. The peptide may exert its hypotensive action, at least in part, through stimulation of NO production. The vasorelaxant effect is endothelium-dependent and does not appear to be mediated by the natriuretic peptide receptor-A, as its action is not modified by isatin (a potent NPR1 antagonist). May act by activating the natriuretic peptide receptor-B (NPR2). This chain is Natriuretic peptide Coa_NP2, found in Crotalus lutosus abyssus (Grand Canyon rattlesnake).